The sequence spans 255 residues: 5'-nucleotidase SurE (255 aa).

4 residues coordinate a divalent metal cation: Asp-7, Asp-8, Ser-38, and Asn-90.

The protein belongs to the SurE nucleotidase family. A divalent metal cation serves as cofactor.

It is found in the cytoplasm. The catalysed reaction is a ribonucleoside 5'-phosphate + H2O = a ribonucleoside + phosphate. Nucleotidase that shows phosphatase activity on nucleoside 5'-monophosphates. This is 5'-nucleotidase SurE from Picrophilus torridus (strain ATCC 700027 / DSM 9790 / JCM 10055 / NBRC 100828 / KAW 2/3).